The following is a 608-amino-acid chain: Eukaryotic translation initiation factor 2A (608 aa).

Residues 1-42 form a disordered region; sequence MSAPNNNNNNTTTTTTTSPSPSQSSPTLTSVASNSTTTTTTE. WD repeat units follow at residues 115 to 161, 207 to 255, 310 to 350, and 351 to 393; these read INRP…ILYK, IKLQ…EYCS, NIKG…PLVD, and FGLN…RICG. Composition is skewed to low complexity over residues 466–478 and 520–544; these read SIQQ…PQPQ and STFK…TTKP. Disordered regions lie at residues 466–499 and 520–554; these read SIQQ…TSPP and STFK…RELT. Positions 545–554 are enriched in basic and acidic residues; that stretch reads AADEPKRELT. The stretch at 550 to 608 forms a coiled coil; sequence KRELTPIEKKIRNVERKLKEVEVLKEKLNSGEFIPPTAIEKINNEQKFLEELRKLQSEL.

This sequence belongs to the WD repeat EIF2A family.

Functions in the early steps of protein synthesis of a small number of specific mRNAs. Acts by directing the binding of methionyl-tRNAi to 40S ribosomal subunits. In contrast to the eIF-2 complex, it binds methionyl-tRNAi to 40S subunits in a codon-dependent manner, whereas the eIF-2 complex binds methionyl-tRNAi to 40S subunits in a GTP-dependent manner. The polypeptide is Eukaryotic translation initiation factor 2A (eif2a) (Dictyostelium discoideum (Social amoeba)).